The following is a 401-amino-acid chain: Tyrosine--tRNA ligase (401 aa).

A 'HIGH' region motif is present at residues 45–54 (PTAPDLHLGH). Residues 230 to 234 (KMSKS) carry the 'KMSKS' region motif. Residue K233 coordinates ATP. An S4 RNA-binding domain is found at 339–399 (IWLAKALVEC…GKRKFAKLKV (61 aa)).

Belongs to the class-I aminoacyl-tRNA synthetase family. TyrS type 2 subfamily. As to quaternary structure, homodimer.

Its subcellular location is the cytoplasm. It catalyses the reaction tRNA(Tyr) + L-tyrosine + ATP = L-tyrosyl-tRNA(Tyr) + AMP + diphosphate + H(+). In terms of biological role, catalyzes the attachment of tyrosine to tRNA(Tyr) in a two-step reaction: tyrosine is first activated by ATP to form Tyr-AMP and then transferred to the acceptor end of tRNA(Tyr). The sequence is that of Tyrosine--tRNA ligase from Campylobacter jejuni subsp. jejuni serotype O:2 (strain ATCC 700819 / NCTC 11168).